The primary structure comprises 688 residues: Elongation factor G 2 (688 aa).

The 276-residue stretch at 7 to 282 (DSIRNIGIIS…AVAAYLPSPR (276 aa)) folds into the tr-type G domain. GTP is bound by residues 16–23 (SHIDAGKT), 80–84 (DTPGH), and 134–137 (NKMD).

Belongs to the TRAFAC class translation factor GTPase superfamily. Classic translation factor GTPase family. EF-G/EF-2 subfamily.

The protein resides in the cytoplasm. Functionally, catalyzes the GTP-dependent ribosomal translocation step during translation elongation. During this step, the ribosome changes from the pre-translocational (PRE) to the post-translocational (POST) state as the newly formed A-site-bound peptidyl-tRNA and P-site-bound deacylated tRNA move to the P and E sites, respectively. Catalyzes the coordinated movement of the two tRNA molecules, the mRNA and conformational changes in the ribosome. In Geobacter metallireducens (strain ATCC 53774 / DSM 7210 / GS-15), this protein is Elongation factor G 2.